The following is a 604-amino-acid chain: Netrin-1 (604 aa).

An N-terminal signal peptide occupies residues methionine 1–glycine 24. One can recognise a Laminin N-terminal domain in the interval histidine 47–arginine 284. N-linked (GlcNAc...) asparagine glycans are attached at residues asparagine 95, asparagine 116, and asparagine 131. 15 disulfide bridges follow: cysteine 119–cysteine 152, cysteine 285–cysteine 294, cysteine 287–cysteine 304, cysteine 306–cysteine 315, cysteine 318–cysteine 338, cysteine 341–cysteine 350, cysteine 343–cysteine 368, cysteine 371–cysteine 380, cysteine 383–cysteine 401, cysteine 404–cysteine 416, cysteine 406–cysteine 423, cysteine 425–cysteine 434, cysteine 437–cysteine 451, cysteine 472–residue 544, and cysteine 491–cysteine 601. Laminin EGF-like domains are found at residues cysteine 285–alanine 340, cysteine 341–alanine 403, and cysteine 404–lysine 453. A glycan (N-linked (GlcNAc...) asparagine) is linked at asparagine 417. In terms of domain architecture, NTR spans cysteine 472–cysteine 601. The short motif at arginine 530–aspartate 532 is the Cell attachment site element.

As to quaternary structure, binds to its receptors; DCC, UNC5A, UNC5B, UNC5C and probably UNC5D. Binds to its receptor; DSCAM. Interacts with APP.

It is found in the secreted. Its subcellular location is the cytoplasm. Functionally, netrins control guidance of CNS commissural axons and peripheral motor axons. Its association with either DCC or some UNC5 receptors will lead to axon attraction or repulsion, respectively. Binding to UNC5C might cause dissociation of UNC5C from polymerized TUBB3 in microtubules and thereby lead to increased microtubule dynamics and axon repulsion. Involved in dorsal root ganglion axon projection towards the spinal cord. It also serves as a survival factor via its association with its receptors which prevent the initiation of apoptosis. Involved in colorectal tumorigenesis by regulating apoptosis. The sequence is that of Netrin-1 (Ntn1) from Rattus norvegicus (Rat).